The primary structure comprises 469 residues: SHC-transforming protein 1 (469 aa).

Positions 1-26 (MNKLSGGGGRRTRVEGGQLGGEEWTR) are disordered. S29 is subject to Phosphoserine. The residue at position 44 (K44) is an N6-acetyllysine. A PID domain is found at 46–229 (MGPGVSYLVR…AGFDGSAWDE (184 aa)). The interval 230-373 (EEEELPDHQY…SMAEQLQGES (144 aa)) is CH1. Phosphotyrosine is present on residues Y239, Y240, and Y313. Positions 322 to 344 (ARQAGGGAGPPNPSVNGSAPRDL) are disordered. The residue at position 339 (S339) is a Phosphoserine. Residues 374–465 (WFHGKLSRRE…GSELCLQQPV (92 aa)) form the SH2 domain.

In terms of assembly, interacts with CPNE3; this interaction may mediate the binding of CPNE3 with ERBB2. Interacts with the NPXY motif of tyrosine-phosphorylated IGF1R and INSR in vitro via the PID domain. Once activated, binds to GRB2. Interacts with tyrosine-phosphorylated CD3T and DDR2. Interacts with the N-terminal region of APS. Interacts with phosphorylated LRP1 and IRS4. Interacts with INPP5D/SHIP1 and INPPL1/SHIP2. Interacts with ALK, GAB2, GRB7 and KIT. Interacts with PTPN6/SHP (tyrosine phosphorylated). Identified in a complex containing FGFR4, NCAM1, CDH2, PLCG1, FRS2A, SRC, SHC1, GAP43 and CTTN. Interacts with EPHB1 and GRB2; activates the MAPK/ERK cascade to regulate cell migration. Interacts with PDGFRB (tyrosine-phosphorylated). Interacts with ERBB4. Interacts with TEK/TIE2 (tyrosine-phosphorylated). Interacts with PTK2/FAK1. Interacts with FLT4 (tyrosine-phosphorylated). Interacts with the Trk receptors NTRK1, NTRK2 and NTRK3; in a phosphotyrosine-dependent manner. Interacts with CEACAM1; this interaction is CEACAM1-phosphorylation-dependent and mediates interaction with EGFR or INSR resulting in decrease coupling of SHC1 to the MAPK3/ERK1-MAPK1/ERK2 pathway. Interacts (via PID domain) with PEAK1 (when phosphorylated). Found in a complex with PPP1CA, PPP1CC, SHC1 and PEAK1. Phosphorylated by activated epidermal growth factor receptor. Phosphorylated in response to KIT signaling. Tyrosine phosphorylated in response to FLT3 signaling and by ligand-activated ALK. Tyrosine phosphorylated by TEK/TIE2. Tyrosine phosphorylated by ligand-activated PDGFRB. May be tyrosine phosphorylated by activated PTK2/FAK1. Dephosphorylation by PTPN2 may regulate interaction with GRB2. Phosphorylated in response to FLT4 signaling. Tyrosine phosphorylated by activated PTK2B/PYK2.

The protein resides in the cytoplasm. The protein localises to the cell junction. It is found in the focal adhesion. Functionally, signaling adapter that couples activated growth factor receptors to signaling pathways. Participates in a signaling cascade initiated by activated KIT and KITLG/SCF. Participates in signaling downstream of the angiopoietin receptor TEK/TIE2, and plays a role in the regulation of endothelial cell migration and sprouting angiogenesis. In Rattus norvegicus (Rat), this protein is SHC-transforming protein 1 (Shc1).